The chain runs to 85 residues: Alpha-toxin BmalphaTx47 (85 aa).

A signal peptide spans 1–19; sequence MNYLIVISFALLLMTGVQS. The LCN-type CS-alpha/beta domain maps to 21 to 83; that stretch reads RDAYIADSEN…VPIRISGSCR (63 aa). Disulfide bonds link Cys-31–Cys-82, Cys-35–Cys-55, Cys-41–Cys-65, and Cys-45–Cys-67.

Belongs to the long (4 C-C) scorpion toxin superfamily. Sodium channel inhibitor family. Alpha subfamily. In terms of tissue distribution, expressed by the venom gland.

Its subcellular location is the secreted. Functionally, alpha toxins bind voltage-independently at site-3 of sodium channels (Nav) and inhibit the inactivation of the activated channels, thereby blocking neuronal transmission. This toxin expressed with the pET-14b vector has low inhibitory activity on sodium channels (11.33% on rNav1.2/SCN2A, 15.96% on mNav1.4/SCN4A and 5.04% on hNav1.5/SCN5A). When expressed with the pET-28a vector, this toxin has higher inhibitory activities (44.12% on rNav1.2/SCN2A, 25.40% on mNav1.4/SCN4A and 65.34% on hNav1.5/SCN5A). In Olivierus martensii (Manchurian scorpion), this protein is Alpha-toxin BmalphaTx47.